The following is a 247-amino-acid chain: MNSAYHRHVAFPSGLGTSTSRQLHSMVPMVLVPVGSTEQHGPHLPLDTDTRIAAAVAGTVVEQFGAPADRDAVVAPPVAYGASGEHEGFPGTVSIGTAALELLLVEYGRSASKWTSRIVFVNGHGGNVEALAAAVALLRYEGRDAGWVPCSVPDADAHAGHTETSVLLHISPDDVLTDELVCGNTAPLAELMPRMRSGGVAAVSELGILGDPTTATAAEGERIFAEMVNGCADRIKRWQPDRNGLLT.

Residues glutamate 38, histidine 40, aspartate 49, histidine 124, and glutamate 163 each coordinate a divalent metal cation.

The protein belongs to the creatininase superfamily. As to quaternary structure, homooctamer. It depends on Fe(2+) as a cofactor. Zn(2+) serves as cofactor.

It carries out the reaction [mycofactocin precursor peptide]-C-terminal glycyl-N-{5-[(4-hydroxyphenyl)methyl]-4,4-dimethyl-2-oxopyrrolidin-3-yl}acetamide + H2O = [mycofactocin precursor peptide]-C-terminal glycine + 3-amino-5-[(4-hydroxyphenyl)methyl]-4,4-dimethyl-2-pyrrolidin-2-one. Functionally, peptidase involved in the biosynthesis of the enzyme cofactor mycofactocin (MFT). Catalyzes cleavage of the MftC-modified MftA peptide to liberate its final two residues, which consist of a cross-linked valine-decarboxylated tyrosine dipeptide (named 3-amino-5-[(4-hydroxyphenyl)methyl]-4,4-dimethyl-2-pyrrolidin-2-one or ADHP). Is required for the in vivo ethanol assimilation in M.smegmatis. This Mycolicibacterium smegmatis (strain ATCC 700084 / mc(2)155) (Mycobacterium smegmatis) protein is Mycofactocin precursor peptide peptidase.